Consider the following 265-residue polypeptide: Homeobox protein CDX-1 (265 aa).

The interval 9–153 (KDSPVYPGPA…GGGGSGKTRT (145 aa)) is disordered. Over residues 30–42 (YGPPAPPPAPPQY) the composition is skewed to pro residues. Low complexity predominate over residues 73–92 (AAAYGPGPAAPAASPASLAF). The span at 93-108 (GPPPDFSPVPAPPGPG) shows a compositional bias: pro residues. The segment covering 110–126 (GLLAQPLGGPGTPSSPG) has biased composition (low complexity). The segment at residues 154–213 (KDKYRVVYTDHQRLELEKEFHYSRYITIRRKSELAANLGLTERQVKIWFQNRRAKERKVN) is a DNA-binding region (homeobox). Positions 157 to 178 (YRVVYTDHQRLELEKEFHYSRY) are interaction with DNA. An interaction with 5-mCpG DNA region spans residues 196–207 (RQVKIWFQNRRA). Residues 207-217 (AKERKVNKKKQ) are compositionally biased toward basic residues. Positions 207–265 (AKERKVNKKKQQQQQPPQPPMAHDITATPAGPSLGGLCPSNTSLLATSSPMPVKEEFLP) are disordered. Polar residues predominate over residues 245-256 (PSNTSLLATSSP).

It belongs to the Caudal homeobox family. Intestinal epithelium.

It is found in the nucleus. Its function is as follows. Plays a role in transcriptional regulation. Involved in activated KRAS-mediated transcriptional activation of PRKD1 in colorectal cancer (CRC) cells. Binds to the PRKD1 promoter in colorectal cancer (CRC) cells. Could play a role in the terminal differentiation of the intestine. Binds preferentially to methylated DNA. The polypeptide is Homeobox protein CDX-1 (CDX1) (Homo sapiens (Human)).